A 414-amino-acid polypeptide reads, in one-letter code: Carboxynorspermidine synthase (414 aa).

This sequence belongs to the saccharopine dehydrogenase family. Carboxynorspermidine synthase subfamily. Homodimer.

The catalysed reaction is carboxynorspermidine + NADP(+) + H2O = L-aspartate 4-semialdehyde + propane-1,3-diamine + NADPH + H(+). It carries out the reaction carboxyspermidine + NADP(+) + H2O = L-aspartate 4-semialdehyde + putrescine + NADPH + H(+). Its activity is regulated as follows. Activated by dithiothreitol and inhibited by SH-reactive compounds. Involved in norspermidine biosynthesis. Catalyzes the synthesis of carboxynorspermidine from L-aspartate 4-semialdehyde and 1,3-diaminopropane. Is also slightly active with putrescine as a substrate. This Vibrio alginolyticus (strain ATCC 17749 / DSM 2171 / NBRC 15630 / NCIMB 1903 / NCTC 12160 / XII-53) protein is Carboxynorspermidine synthase.